The following is an 840-amino-acid chain: Translation initiation factor IF-2 (840 aa).

Disordered regions lie at residues 94 to 157 (KRSP…AGAE) and 169 to 256 (PVAK…PTGP). Positions 95–143 (RSPDEIEAERQRELEEQRAAEEAERLKAEEAAARQRAEEEARKAEEAAR) are enriched in basic and acidic residues. Over residues 144–157 (AKAAQEAAATAGAE) the composition is skewed to low complexity. 2 stretches are compositionally biased toward basic and acidic residues: residues 175-191 (AVEE…PKRD) and 223-232 (STDEESDGYR). Positions 233 to 247 (RGGRGGKSKLKKRNQ) are enriched in basic residues. The tr-type G domain occupies 340 to 509 (TRAPVVTVMG…LLQAEVLELK (170 aa)). The interval 349–356 (GHVDHGKT) is G1. 349–356 (GHVDHGKT) contributes to the GTP binding site. The tract at residues 374 to 378 (GITQH) is G2. The G3 stretch occupies residues 395–398 (DTPG). GTP-binding positions include 395 to 399 (DTPGH) and 449 to 452 (NKID). A G4 region spans residues 449-452 (NKID). The tract at residues 485–487 (SAK) is G5.

It belongs to the TRAFAC class translation factor GTPase superfamily. Classic translation factor GTPase family. IF-2 subfamily.

It localises to the cytoplasm. One of the essential components for the initiation of protein synthesis. Protects formylmethionyl-tRNA from spontaneous hydrolysis and promotes its binding to the 30S ribosomal subunits. Also involved in the hydrolysis of GTP during the formation of the 70S ribosomal complex. In Pseudomonas aeruginosa (strain UCBPP-PA14), this protein is Translation initiation factor IF-2.